Here is a 119-residue protein sequence, read N- to C-terminus: Large ribosomal subunit protein P3 (119 aa).

The segment at 81 to 119 is disordered; the sequence is GAAAGAASGGAAAEAPKAEEKKEEEKEESEDDLGFSLFD. Residues 84–95 show a composition bias toward low complexity; it reads AGAASGGAAAEA.

Belongs to the eukaryotic ribosomal protein P1/P2 family. Post-translationally, phosphorylated.

Plays an important role in the elongation step of protein synthesis. The protein is Large ribosomal subunit protein P3 of Oryza sativa subsp. japonica (Rice).